The sequence spans 600 residues: Putative fucosyltransferase R654 (600 aa).

This sequence belongs to the glycosyltransferase 10 family.

The protein is Putative fucosyltransferase R654 of Acanthamoeba polyphaga mimivirus (APMV).